Reading from the N-terminus, the 423-residue chain is Protein CLP1 homolog (423 aa).

Residues glutamate 16, lysine 57, and 119–124 contribute to the ATP site; that span reads DVGKST.

It belongs to the Clp1 family. Clp1 subfamily.

It is found in the nucleus. Its function is as follows. Required for endonucleolytic cleavage during polyadenylation-dependent pre-mRNA 3'-end formation. This chain is Protein CLP1 homolog (cbc), found in Drosophila sechellia (Fruit fly).